Here is a 348-residue protein sequence, read N- to C-terminus: Selenide, water dikinase (348 aa).

Cys-17 is an active-site residue. ATP is bound by residues Lys-20 and 47–49 (THD). Asp-50 lines the Mg(2+) pocket. Residues Asp-67, Asp-90, and 138-140 (GHT) each bind ATP. A Mg(2+)-binding site is contributed by Asp-90. Residue Asp-226 coordinates Mg(2+).

It belongs to the selenophosphate synthase 1 family. Class I subfamily. As to quaternary structure, homodimer. Mg(2+) is required as a cofactor.

The catalysed reaction is hydrogenselenide + ATP + H2O = selenophosphate + AMP + phosphate + 2 H(+). In terms of biological role, synthesizes selenophosphate from selenide and ATP. This is Selenide, water dikinase from Porphyromonas gingivalis (strain ATCC 33277 / DSM 20709 / CIP 103683 / JCM 12257 / NCTC 11834 / 2561).